The following is a 223-amino-acid chain: MIF4G domain-containing protein A (223 aa).

One can recognise an MIF4G domain in the interval 7–206; that stretch reads QEDYKMQAFD…LEMIEYRAAG (200 aa).

The protein belongs to the MIF4GD family. As to quaternary structure, interacts with eif4g1, eif4g2 and slbp; probably tethered by SLBP to the 3'-end of mRNAs ending with the histone stem-loop, it also interacts with eif4g1 which is bound to their 5'-end.

Its subcellular location is the cytoplasm. It is found in the nucleus. In terms of biological role, functions in replication-dependent translation of histone mRNAs which differ from other eukaryotic mRNAs in that they do not end with a poly-A tail but a stem-loop. May participate in circularizing those mRNAs specifically enhancing their translation. This Xenopus laevis (African clawed frog) protein is MIF4G domain-containing protein A (mif4gd-a).